Reading from the N-terminus, the 212-residue chain is Phosphatidylserine decarboxylase proenzyme (212 aa).

The active-site Schiff-base intermediate with substrate; via pyruvic acid is S182. A Pyruvic acid (Ser); by autocatalysis modification is found at S182.

The protein belongs to the phosphatidylserine decarboxylase family. PSD-A subfamily. Heterodimer of a large membrane-associated beta subunit and a small pyruvoyl-containing alpha subunit. Pyruvate is required as a cofactor. Is synthesized initially as an inactive proenzyme. Formation of the active enzyme involves a self-maturation process in which the active site pyruvoyl group is generated from an internal serine residue via an autocatalytic post-translational modification. Two non-identical subunits are generated from the proenzyme in this reaction, and the pyruvate is formed at the N-terminus of the alpha chain, which is derived from the carboxyl end of the proenzyme. The post-translation cleavage follows an unusual pathway, termed non-hydrolytic serinolysis, in which the side chain hydroxyl group of the serine supplies its oxygen atom to form the C-terminus of the beta chain, while the remainder of the serine residue undergoes an oxidative deamination to produce ammonia and the pyruvoyl prosthetic group on the alpha chain.

It is found in the cell membrane. It catalyses the reaction a 1,2-diacyl-sn-glycero-3-phospho-L-serine + H(+) = a 1,2-diacyl-sn-glycero-3-phosphoethanolamine + CO2. The protein operates within phospholipid metabolism; phosphatidylethanolamine biosynthesis; phosphatidylethanolamine from CDP-diacylglycerol: step 2/2. Catalyzes the formation of phosphatidylethanolamine (PtdEtn) from phosphatidylserine (PtdSer). The chain is Phosphatidylserine decarboxylase proenzyme from Chlorobium luteolum (strain DSM 273 / BCRC 81028 / 2530) (Pelodictyon luteolum).